A 185-amino-acid chain; its full sequence is Ribosome-recycling factor (185 aa).

This sequence belongs to the RRF family.

It localises to the cytoplasm. In terms of biological role, responsible for the release of ribosomes from messenger RNA at the termination of protein biosynthesis. May increase the efficiency of translation by recycling ribosomes from one round of translation to another. The sequence is that of Ribosome-recycling factor from Shewanella baltica (strain OS223).